Consider the following 368-residue polypeptide: Peptide chain release factor 2 (368 aa).

N5-methylglutamine is present on Gln248.

It belongs to the prokaryotic/mitochondrial release factor family. Post-translationally, methylated by PrmC. Methylation increases the termination efficiency of RF2.

It is found in the cytoplasm. Peptide chain release factor 2 directs the termination of translation in response to the peptide chain termination codons UGA and UAA. This Corynebacterium glutamicum (strain R) protein is Peptide chain release factor 2.